The sequence spans 425 residues: Riboflavin biosynthesis protein RibBA (425 aa).

The DHBP synthase stretch occupies residues 1–204 (MTRLDSVERA…IADLIEWRRK (204 aa)). D-ribulose 5-phosphate contacts are provided by residues 28-29 (RE), Asp-33, 141-145 (RPGHT), and Glu-165. Glu-29 is a Mg(2+) binding site. His-144 provides a ligand contact to Mg(2+). The interval 205 to 425 (HEKHIERVAE…HLPGEFGGAL (221 aa)) is GTP cyclohydrolase II. A GTP-binding site is contributed by 259 to 263 (RVHSE). Positions 264, 275, and 277 each coordinate Zn(2+). Residues Gln-280, 303–305 (EGR), and Thr-325 contribute to the GTP site. The Proton acceptor; for GTP cyclohydrolase activity role is filled by Asp-337. Arg-339 serves as the catalytic Nucleophile; for GTP cyclohydrolase activity. Thr-360 and Lys-365 together coordinate GTP.

The protein in the N-terminal section; belongs to the DHBP synthase family. It in the C-terminal section; belongs to the GTP cyclohydrolase II family. Requires Mg(2+) as cofactor. It depends on Mn(2+) as a cofactor. Zn(2+) is required as a cofactor.

It carries out the reaction D-ribulose 5-phosphate = (2S)-2-hydroxy-3-oxobutyl phosphate + formate + H(+). It catalyses the reaction GTP + 4 H2O = 2,5-diamino-6-hydroxy-4-(5-phosphoribosylamino)-pyrimidine + formate + 2 phosphate + 3 H(+). The protein operates within cofactor biosynthesis; riboflavin biosynthesis; 2-hydroxy-3-oxobutyl phosphate from D-ribulose 5-phosphate: step 1/1. It participates in cofactor biosynthesis; riboflavin biosynthesis; 5-amino-6-(D-ribitylamino)uracil from GTP: step 1/4. Its function is as follows. Catalyzes the conversion of D-ribulose 5-phosphate to formate and 3,4-dihydroxy-2-butanone 4-phosphate. Functionally, catalyzes the conversion of GTP to 2,5-diamino-6-ribosylamino-4(3H)-pyrimidinone 5'-phosphate (DARP), formate and pyrophosphate. The protein is Riboflavin biosynthesis protein RibBA of Mycobacterium marinum (strain ATCC BAA-535 / M).